The sequence spans 173 residues: Soluble secreted antigen MPT53 (173 aa).

An N-terminal signal peptide occupies residues 1 to 38; sequence MSLRLVSPIKAFADGIVAVAIAVVLMFGLANTPRAVAA. Residues C73 and C76 are joined by a disulfide bond.

Belongs to the thioredoxin family.

The protein localises to the secreted. Disulfide oxidoreductase that catalyzes the oxidation of reduced, unfolded secreted proteins to form disulfide bonds. Despite a weak homology to thioredoxin this cannot serve as a substrate for thioredoxin reductase. This Mycobacterium bovis (strain ATCC BAA-935 / AF2122/97) protein is Soluble secreted antigen MPT53 (mpt53).